We begin with the raw amino-acid sequence, 590 residues long: Regulatory solute carrier protein family 1 member 1 (590 aa).

Disordered regions lie at residues 1-116 (MSSS…TQGL), 144-234 (EEGW…PDSE), 277-331 (SPSS…AEES), and 359-466 (EEVT…SHRT). The span at 16 to 35 (SSGQSPEAGNPTSLARSVSA) shows a compositional bias: polar residues. Low complexity predominate over residues 78 to 91 (SPCAAAAAPSSAMP). A compositionally biased stretch (polar residues) spans 150–161 (ENQNPSQVNDLQ). Composition is skewed to basic and acidic residues over residues 162-179 (QHQE…RDAP) and 188-203 (PGER…REAT). Positions 313-331 (SSSSVCGSSQPPAESAEES) are enriched in low complexity. Residues 362–376 (TCQSEGTAWGQTRVN) show a composition bias toward polar residues. Basic and acidic residues-rich tracts occupy residues 380–395 (RWTE…DRPQ) and 404–420 (VKTE…RIED). The span at 451 to 465 (SVTVTSAETSNQSHR) shows a compositional bias: polar residues. The region spanning 544–584 (GFPAADIDRILRAGFTLQEALGALHRVGGNADLALLVLLAK) is the UBA domain.

In terms of assembly, interacts with YRDC. As to expression, highly expressed in renal outer medulla, renal inner medulla, duodenum, ileum and jejunum. Moderately expressed in renal outer cortex, renal papilla, brain and liver.

Its subcellular location is the cell membrane. The protein localises to the nucleus. The protein resides in the golgi apparatus. It is found in the trans-Golgi network. Functionally, mediates transcriptional and post-transcriptional regulation of SLC5A1. Inhibits a dynamin and PKC-dependent exocytotic pathway of SLC5A1. Also involved in transcriptional regulation of SLC22A2. Exhibits glucose-dependent, short-term inhibition of SLC5A1 and SLC22A2 by inhibiting the release of vesicles from the trans-Golgi network. The protein is Regulatory solute carrier protein family 1 member 1 (RSC1A1) of Oryctolagus cuniculus (Rabbit).